A 289-amino-acid polypeptide reads, in one-letter code: 2-hydroxy-6-oxononadienedioate/2-hydroxy-6-oxononatrienedioate hydrolase 1 (289 aa).

One can recognise an AB hydrolase-1 domain in the interval 39–275 (TVVMLHGSGP…RCGHWAQWEH (237 aa)). Histidine 269 (proton acceptor) is an active-site residue.

Belongs to the AB hydrolase superfamily. MhpC family. Homodimer.

The catalysed reaction is (2Z,4E)-2-hydroxy-6-oxonona-2,4-dienedioate + H2O = (2Z)-2-hydroxypenta-2,4-dienoate + succinate + H(+). It carries out the reaction (2Z,4E,7E)-2-hydroxy-6-oxonona-2,4,7-trienedioate + H2O = (2Z)-2-hydroxypenta-2,4-dienoate + fumarate + H(+). It participates in aromatic compound metabolism; 3-phenylpropanoate degradation. Its function is as follows. Catalyzes the cleavage of the C5-C6 bond of 2-hydroxy-6-oxononadienedioate and 2-hydroxy-6-oxononatrienedioate, a dienol ring fission product of the bacterial meta-cleavage pathway for degradation of phenylpropionic acid. This chain is 2-hydroxy-6-oxononadienedioate/2-hydroxy-6-oxononatrienedioate hydrolase 1, found in Dechloromonas aromatica (strain RCB).